Reading from the N-terminus, the 409-residue chain is Multifunctional CCA protein (409 aa).

Gly-8 and Arg-11 together coordinate ATP. CTP contacts are provided by Gly-8 and Arg-11. The Mg(2+) site is built by Asp-21 and Asp-23. ATP contacts are provided by Arg-91, Arg-137, and Arg-140. 3 residues coordinate CTP: Arg-91, Arg-137, and Arg-140. One can recognise an HD domain in the interval 228–329 (TGAHTLSVLL…LELLQSFDVF (102 aa)).

Belongs to the tRNA nucleotidyltransferase/poly(A) polymerase family. Bacterial CCA-adding enzyme type 1 subfamily. As to quaternary structure, monomer. Can also form homodimers and oligomers. It depends on Mg(2+) as a cofactor. Ni(2+) is required as a cofactor.

It catalyses the reaction a tRNA precursor + 2 CTP + ATP = a tRNA with a 3' CCA end + 3 diphosphate. The catalysed reaction is a tRNA with a 3' CCA end + 2 CTP + ATP = a tRNA with a 3' CCACCA end + 3 diphosphate. In terms of biological role, catalyzes the addition and repair of the essential 3'-terminal CCA sequence in tRNAs without using a nucleic acid template. Adds these three nucleotides in the order of C, C, and A to the tRNA nucleotide-73, using CTP and ATP as substrates and producing inorganic pyrophosphate. tRNA 3'-terminal CCA addition is required both for tRNA processing and repair. Also involved in tRNA surveillance by mediating tandem CCA addition to generate a CCACCA at the 3' terminus of unstable tRNAs. While stable tRNAs receive only 3'-terminal CCA, unstable tRNAs are marked with CCACCA and rapidly degraded. The sequence is that of Multifunctional CCA protein from Pseudomonas fluorescens (strain ATCC BAA-477 / NRRL B-23932 / Pf-5).